The sequence spans 501 residues: ADP,ATP carrier protein 3 (501 aa).

12 helical membrane passes run 23–43, 59–79, 90–110, 146–166, 183–203, 227–247, 293–313, 326–346, 361–381, 383–403, 446–466, and 470–490; these read LKLFIPMALMMLCILFNFGAL, IISLFKLWLVLPSCVIFTVLY, YIFYIIVGSFLLFFLLFAYII, YALMYIFSELWSAVVINLMFW, PVLGMVGNIGLIIAGSVLVFF, IMLQPIMSIIVAAGIIAMLLF, IALLIICYGLLINIVEGPWKA, FNFMGRFNIWMGISCVTFMVI, LLTPIMLSITGLMFFIFIIFI, EIGACFGDFNLLYAAIIVGAI, FGKSLGAFIQSLIFIIIPTAT, and IIIYLLVIFIVMMSLWIWNVI.

Belongs to the ADP/ATP translocase tlc family.

The protein localises to the cell membrane. In terms of biological role, provides the rickettsial cell with host ATP in exchange for rickettsial ADP. This is an obligate exchange system. This energy acquiring activity is an important component of rickettsial parasitism. This is ADP,ATP carrier protein 3 (tlcC) from Rickettsia felis (strain ATCC VR-1525 / URRWXCal2) (Rickettsia azadi).